Reading from the N-terminus, the 164-residue chain is CASP-like protein 1C1 (164 aa).

The Cytoplasmic portion of the chain corresponds to 1-7 (MVKLTKR). A helical transmembrane segment spans residues 8–28 (IGGLVLRLAAFGAALAALIVM). The Extracellular segment spans residues 29–51 (ITSRERASFLAISLEAKYTDMAA). The chain crosses the membrane as a helical span at residues 52 to 72 (FKYFVIANAVVSVYSFLVLFL). The Cytoplasmic portion of the chain corresponds to 73–80 (PKESLLWK). The chain crosses the membrane as a helical span at residues 81 to 101 (FVVVLDLVMTMLLTSSLSAAL). Residues 102–129 (AVAQVGKKGNANAGWLPICGQVPKFCDQ) are Extracellular-facing. The chain crosses the membrane as a helical span at residues 130–150 (ITGALIAGFVALVLYVLLLLY). At 151–164 (SLHAVVDPFLLQKS) the chain is on the cytoplasmic side.

Belongs to the Casparian strip membrane proteins (CASP) family. Homodimer and heterodimers. In terms of tissue distribution, expressed in the stele of the root.

The protein localises to the cell membrane. The protein is CASP-like protein 1C1 of Arabidopsis thaliana (Mouse-ear cress).